We begin with the raw amino-acid sequence, 294 residues long: Putative glucose-6-phosphate 1-epimerase (294 aa).

The substrate site is built by Arg74 and Arg99. Residue His164 is part of the active site. Asp208 lines the substrate pocket. Residue Glu267 is part of the active site.

It belongs to the glucose-6-phosphate 1-epimerase family. Monomer in solution.

The enzyme catalyses alpha-D-glucose 6-phosphate = beta-D-glucose 6-phosphate. The polypeptide is Putative glucose-6-phosphate 1-epimerase (yeaD) (Escherichia coli (strain K12)).